We begin with the raw amino-acid sequence, 789 residues long: 1-phosphatidylinositol 4,5-bisphosphate phosphodiesterase delta-3 (789 aa).

One can recognise a PH domain in the interval 63–172; sequence RAMLRGSRLR…WVRGLTKLRA (110 aa). A substrate binding region spans residues 73 to 101; that stretch reads KIRSRTWHKERLYRLQEDGLSVWFQRRIP. At Ser-105 the chain carries Phosphoserine. EF-hand domains are found at residues 182–217, 218–253, and 250–285; these read RLDHWIHSYLHRADSNQDSKMSFKEIKSLLRMVNVD, MNDMYAYLLFKECDHSNNDRLEGAEIEEFLRRLLKR, and LLKRPELEEIFHQYSGEDRVLSAPELLEFLEDQGEE. Ca(2+)-binding residues include Asp-195, Asn-197, Asp-199, Lys-201, Glu-206, Asp-231, Ser-233, Asn-235, Arg-237, and Glu-242. The region spanning 337–482 is the PI-PLC X-box domain; that stretch reads QDMNQPLAHY…LKGRVLVKGK (146 aa). The active site involves His-352. Ca(2+)-binding residues include Asn-353, Glu-382, and Asp-384. Residue His-397 is part of the active site. Glu-431 is a Ca(2+) binding site. The segment at 461 to 519 is disordered; sequence SPNPEELPSPEQLKGRVLVKGKKLPAARSEDGRALSDREEEEEDDEEEEEEVEAAAQRR. The substrate site is built by Lys-480 and Lys-482. Residues 488–497 are compositionally biased toward basic and acidic residues; the sequence is RSEDGRALSD. Ser-496 carries the post-translational modification Phosphoserine. Acidic residues predominate over residues 498 to 513; that stretch reads REEEEEDDEEEEEEVE. The PI-PLC Y-box domain maps to 528 to 644; sequence LSALAVYCHA…GYVLKPACLR (117 aa). Ser-557 contacts substrate. Ser-573 carries the post-translational modification Phosphoserine. A substrate-binding site is contributed by Arg-584. The C2 domain occupies 644 to 769; that stretch reads RQPDSTFDPE…QGYRHIHLLS (126 aa). Ca(2+)-binding residues include Ile-683, Asp-685, Asn-709, Asp-738, Tyr-739, and Asp-740.

Ca(2+) serves as cofactor. As to expression, present in corneal epithelial cells (at protein level).

It localises to the membrane. The protein resides in the cytoplasm. Its subcellular location is the cleavage furrow. The enzyme catalyses a 1,2-diacyl-sn-glycero-3-phospho-(1D-myo-inositol-4,5-bisphosphate) + H2O = 1D-myo-inositol 1,4,5-trisphosphate + a 1,2-diacyl-sn-glycerol + H(+). With respect to regulation, strongly activated by phosphatidic acid. Inhibited by phosphatidylethanolamine (PtdEtn), phosphatidylcholine (PtdCho), sphingomyelin and phosphatidylserine (PtdSer). Hydrolyzes the phosphatidylinositol 4,5-bisphosphate (PIP2) to generate 2 second messenger molecules diacylglycerol (DAG) and inositol 1,4,5-trisphosphate (IP3). DAG mediates the activation of protein kinase C (PKC), while IP3 releases Ca(2+) from intracellular stores. Essential for trophoblast and placental development. May participate in cytokinesis by hydrolyzing PIP2 at the cleavage furrow. Regulates neurite outgrowth through the inhibition of RhoA/Rho kinase signaling. This Homo sapiens (Human) protein is 1-phosphatidylinositol 4,5-bisphosphate phosphodiesterase delta-3.